A 694-amino-acid polypeptide reads, in one-letter code: ATP-dependent RNA helicase DHX33 (694 aa).

The 169-residue stretch at 78–246 folds into the Helicase ATP-binding domain; it reads LKELEANDTV…FNCKGMYLEG (169 aa). 91 to 98 provides a ligand contact to ATP; that stretch reads SETGSGKT. A DEAH box motif is present at residues 188-191; that stretch reads DEAH. Residues 270–443 form the Helicase C-terminal domain; that stretch reads TLFHIHRTTP…SMVLQLLALD (174 aa).

This sequence belongs to the DEAD box helicase family. DEAH subfamily.

The protein localises to the nucleus. The protein resides in the nucleolus. The enzyme catalyses ATP + H2O = ADP + phosphate + H(+). In terms of biological role, part of a translational control module, also containing pths/DDX47 and ais/DDX52, which coordinates germline stem cell differentiation with ribosome biogenesis during oogenesis. This module allows for coregulation of ribosomal proteins and non1/GTPBP4, a p53 repressor, preventing p53 stabilization, cell cycle arrest and loss of stem cell differentiation. This is ATP-dependent RNA helicase DHX33 from Drosophila melanogaster (Fruit fly).